Consider the following 983-residue polypeptide: UPF0182 protein CMM_1204 (983 aa).

Helical transmembrane passes span 16 to 36 (LAIT…FAGF), 56 to 76 (WGAG…PVFV), 108 to 128 (LAMF…ASSG), 161 to 181 (FYHA…LGVL), 205 to 225 (IQIA…IWLD), 255 to 275 (AILA…AVIG), and 281 to 301 (IIGT…YPAI). The span at 699–714 (QDLWTTPNDPTATTEA) shows a compositional bias: polar residues. Disordered regions lie at residues 699–718 (QDLW…GTPA) and 884–936 (DSGA…AQDV). A compositionally biased stretch (gly residues) spans 902–918 (GGTGDGATDGATDGGTG). A compositionally biased stretch (low complexity) spans 919 to 933 (STPTPAPTTSPSAPA).

It belongs to the UPF0182 family.

The protein localises to the cell membrane. The polypeptide is UPF0182 protein CMM_1204 (Clavibacter michiganensis subsp. michiganensis (strain NCPPB 382)).